The chain runs to 258 residues: Imidazole glycerol phosphate synthase subunit HisF (258 aa).

Active-site residues include Asp-11 and Asp-130.

Belongs to the HisA/HisF family. In terms of assembly, heterodimer of HisH and HisF.

The protein localises to the cytoplasm. The enzyme catalyses 5-[(5-phospho-1-deoxy-D-ribulos-1-ylimino)methylamino]-1-(5-phospho-beta-D-ribosyl)imidazole-4-carboxamide + L-glutamine = D-erythro-1-(imidazol-4-yl)glycerol 3-phosphate + 5-amino-1-(5-phospho-beta-D-ribosyl)imidazole-4-carboxamide + L-glutamate + H(+). It participates in amino-acid biosynthesis; L-histidine biosynthesis; L-histidine from 5-phospho-alpha-D-ribose 1-diphosphate: step 5/9. In terms of biological role, IGPS catalyzes the conversion of PRFAR and glutamine to IGP, AICAR and glutamate. The HisF subunit catalyzes the cyclization activity that produces IGP and AICAR from PRFAR using the ammonia provided by the HisH subunit. The polypeptide is Imidazole glycerol phosphate synthase subunit HisF (Cronobacter sakazakii (strain ATCC BAA-894) (Enterobacter sakazakii)).